We begin with the raw amino-acid sequence, 431 residues long: Serine--tRNA ligase (431 aa).

236–238 (TAE) contributes to the L-serine binding site. 267 to 269 (RSE) serves as a coordination point for ATP. E290 provides a ligand contact to L-serine. 354-357 (EISS) is a binding site for ATP. Residue S389 participates in L-serine binding.

It belongs to the class-II aminoacyl-tRNA synthetase family. Type-1 seryl-tRNA synthetase subfamily. In terms of assembly, homodimer. The tRNA molecule binds across the dimer.

The protein localises to the cytoplasm. The enzyme catalyses tRNA(Ser) + L-serine + ATP = L-seryl-tRNA(Ser) + AMP + diphosphate + H(+). The catalysed reaction is tRNA(Sec) + L-serine + ATP = L-seryl-tRNA(Sec) + AMP + diphosphate + H(+). Its pathway is aminoacyl-tRNA biosynthesis; selenocysteinyl-tRNA(Sec) biosynthesis; L-seryl-tRNA(Sec) from L-serine and tRNA(Sec): step 1/1. Its function is as follows. Catalyzes the attachment of serine to tRNA(Ser). Is also able to aminoacylate tRNA(Sec) with serine, to form the misacylated tRNA L-seryl-tRNA(Sec), which will be further converted into selenocysteinyl-tRNA(Sec). This chain is Serine--tRNA ligase, found in Janthinobacterium sp. (strain Marseille) (Minibacterium massiliensis).